The sequence spans 881 residues: DNA mismatch repair protein MutS (881 aa).

626 to 633 contacts ATP; sequence GPNMAGKS.

Belongs to the DNA mismatch repair MutS family.

Functionally, this protein is involved in the repair of mismatches in DNA. It is possible that it carries out the mismatch recognition step. This protein has a weak ATPase activity. This chain is DNA mismatch repair protein MutS, found in Desulfosudis oleivorans (strain DSM 6200 / JCM 39069 / Hxd3) (Desulfococcus oleovorans).